A 373-amino-acid polypeptide reads, in one-letter code: MIALHFGAGNIGRGFIGALLHHSGYDVVFADVNETMVSLLNEKKEYTVELAEEGRSSEIIGPVSAINSGSQTEELYRLMNEAALITTAVGPNVLKLIAPSIAEGLRRRNTANTLNIIACENMIGGSSFLKKEIYSHLTEAEQKSVSETVGFPNSAVDRIVPIQHHEDPLKVSVEPFFEWVIDESGFKGKTPVINGALFVDDLTPYIERKLFTVNTGHAVTAYVGYQRGLKTVKEAIDHPEIRRVVHSALLETGDYLVKSYGFKQTEHEQYIKKIIGRFENPFISDDVTRVARSPLRKLGENDRLVGPAKKIKEPNALAEGIAAALRFDFTGDPEAVELQALIEEKGYSGVLQEVCGIQSHEPLHAIILKKLNQ.

3–14 (ALHFGAGNIGRG) contacts NAD(+).

The protein belongs to the mannitol dehydrogenase family.

It catalyses the reaction D-mannitol 1-phosphate + NAD(+) = beta-D-fructose 6-phosphate + NADH + H(+). The sequence is that of Mannitol-1-phosphate 5-dehydrogenase (mtlD) from Bacillus subtilis (strain 168).